The following is a 90-amino-acid chain: Small ribosomal subunit protein uS15 (90 aa).

Belongs to the universal ribosomal protein uS15 family. In terms of assembly, part of the 30S ribosomal subunit. Forms a bridge to the 50S subunit in the 70S ribosome, contacting the 23S rRNA.

Its function is as follows. One of the primary rRNA binding proteins, it binds directly to 16S rRNA where it helps nucleate assembly of the platform of the 30S subunit by binding and bridging several RNA helices of the 16S rRNA. In terms of biological role, forms an intersubunit bridge (bridge B4) with the 23S rRNA of the 50S subunit in the ribosome. The polypeptide is Small ribosomal subunit protein uS15 (Blochmanniella floridana).